A 144-amino-acid chain; its full sequence is Probable transcription termination protein NusA (144 aa).

Positions 101 to 144 (RTDIVVGVKPEEIGKVIGKEGKNIKLFKDAVSRYFNVNSISVKQ) constitute a KH domain.

The protein belongs to the NusA family.

Its subcellular location is the cytoplasm. Its function is as follows. Participates in transcription termination. In Thermoplasma acidophilum (strain ATCC 25905 / DSM 1728 / JCM 9062 / NBRC 15155 / AMRC-C165), this protein is Probable transcription termination protein NusA.